Here is a 210-residue protein sequence, read N- to C-terminus: High mobility group protein B2 (210 aa).

Lys3 is modified (N6-acetyllysine). Residues 9 to 79 constitute a DNA-binding region (HMG box 1); that stretch reads PRGKMSSYAF…RYDREMKNYV (71 aa). At Cys23 the chain carries Cysteine sulfonic acid (-SO3H); alternate. Cys23 and Cys45 are joined by a disulfide. Lys30 is subject to N6-acetyllysine. The residue at position 35 (Ser35) is a Phosphoserine. N6-acetyllysine is present on Lys43. Cys45 carries the post-translational modification Cysteine sulfonic acid (-SO3H); alternate. Residues 51–76 show a composition bias toward basic and acidic residues; the sequence is TMSAKEKSKFEDLAKSDKARYDREMK. The segment at 51-102 is disordered; that stretch reads TMSAKEKSKFEDLAKSDKARYDREMKNYVPPKGDKKGKKKDPNAPKRPPSAF. Residue Lys90 is modified to N6-acetyllysine. A DNA-binding region (HMG box 2) is located at residues 95–163; the sequence is PKRPPSAFFL…KYEKDIAAYR (69 aa). Ser100 is modified (phosphoserine). Cys106 is subject to Cysteine sulfonic acid (-SO3H). An N6-acetyllysine mark is found at Lys114 and Lys141. Positions 162–172 are enriched in basic and acidic residues; that stretch reads YRAKGKSEVGK. Residues 162–210 are disordered; that stretch reads YRAKGKSEVGKKGPGRPTGSKKKNEPEDEEEEEEEEDDEDEEEEDEDEE. The tract at residues 165-180 is required for chemotactic activity; sequence KGKSEVGKKGPGRPTG. The segment covering 187-210 has biased composition (acidic residues); it reads PEDEEEEEEEEDDEDEEEEDEDEE.

This sequence belongs to the HMGB family. In terms of assembly, interacts with POU2F2, POU2F1 and POU3F1. Component of the RAG complex composed of core components RAG1 and RAG2, and associated component HMGB1 or HMGB2. Component of the SET complex, composed of at least ANP32A, APEX1, HMGB2, NME1, SET and TREX1. Directly interacts with SET. Interacts with LEF1. In terms of processing, reduction/oxidation of cysteine residues Cys-23, Cys-45 and Cys-106 and a possible intramolecular disulfide bond involving Cys-23 and Cys-45 give rise to different redox forms with specific functional activities in various cellular compartments: 1- fully reduced HMGB2 (HMGB2C23hC45hC106h), 2- disulfide HMGB2 (HMGB2C23-C45C106h) and 3- sulfonyl HMGB2 (HMGB2C23soC45soC106so).

The protein resides in the nucleus. It localises to the chromosome. Its subcellular location is the cytoplasm. The protein localises to the secreted. Its function is as follows. Multifunctional protein with various roles in different cellular compartments. May act in a redox sensitive manner. In the nucleus is an abundant chromatin-associated non-histone protein involved in transcription, chromatin remodeling and V(D)J recombination and probably other processes. Binds DNA with a preference to non-canonical DNA structures such as single-stranded DNA. Can bent DNA and enhance DNA flexibility by looping thus providing a mechanism to promote activities on various gene promoters by enhancing transcription factor binding and/or bringing distant regulatory sequences into close proximity. Involved in V(D)J recombination by acting as a cofactor of the RAG complex: acts by stimulating cleavage and RAG protein binding at the 23 bp spacer of conserved recombination signal sequences (RSS). Proposed to be involved in the innate immune response to nucleic acids by acting as a cytoplasmic promiscuous immunogenic DNA/RNA sensor which cooperates with subsequent discriminative sensing by specific pattern recognition receptors. In the extracellular compartment acts as a chemokine. Promotes proliferation and migration of endothelial cells implicating AGER/RAGE. Has antimicrobial activity in gastrointestinal epithelial tissues. Involved in inflammatory response to antigenic stimulus coupled with pro-inflammatory activity. May play a role in germ cell differentiation. Involved in modulation of neurogenesis probably by regulation of neural stem proliferation. Involved in articular cartilage surface maintenance implicating LEF1 and the Wnt/beta-catenin pathway. This Rattus norvegicus (Rat) protein is High mobility group protein B2 (Hmgb2).